A 147-amino-acid chain; its full sequence is Large ribosomal subunit protein bL9 (147 aa).

It belongs to the bacterial ribosomal protein bL9 family.

Binds to the 23S rRNA. This chain is Large ribosomal subunit protein bL9, found in Trichlorobacter lovleyi (strain ATCC BAA-1151 / DSM 17278 / SZ) (Geobacter lovleyi).